We begin with the raw amino-acid sequence, 222 residues long: UPF0758 protein Ppha_0935 (222 aa).

The MPN domain maps to 100 to 222; sequence KIQAARDVFE…CFSFRESGLL (123 aa). Residues His-171, His-173, and Asp-184 each contribute to the Zn(2+) site. Residues 171-184 carry the JAMM motif motif; sequence HNHPSGDVEPSNAD.

The protein belongs to the UPF0758 family.

The sequence is that of UPF0758 protein Ppha_0935 from Pelodictyon phaeoclathratiforme (strain DSM 5477 / BU-1).